The sequence spans 374 residues: Chaperone protein DnaJ (374 aa).

Residues 4–69 form the J domain; the sequence is DFYETLCVSR…QKRAAYDRFG (66 aa). The CR-type zinc finger occupies 131 to 210; the sequence is GKTAQIRVPT…CSGQGRLTEE (80 aa). Zn(2+) contacts are provided by cysteine 144, cysteine 147, cysteine 161, cysteine 164, cysteine 184, cysteine 187, cysteine 198, and cysteine 201. 4 CXXCXGXG motif repeats span residues 144 to 151, 161 to 168, 184 to 191, and 198 to 205; these read CDECAGSG, CPMCHGAG, CPQCQGRG, and CRKCSGQG.

The protein belongs to the DnaJ family. Homodimer. Zn(2+) serves as cofactor.

It localises to the cytoplasm. Participates actively in the response to hyperosmotic and heat shock by preventing the aggregation of stress-denatured proteins and by disaggregating proteins, also in an autonomous, DnaK-independent fashion. Unfolded proteins bind initially to DnaJ; upon interaction with the DnaJ-bound protein, DnaK hydrolyzes its bound ATP, resulting in the formation of a stable complex. GrpE releases ADP from DnaK; ATP binding to DnaK triggers the release of the substrate protein, thus completing the reaction cycle. Several rounds of ATP-dependent interactions between DnaJ, DnaK and GrpE are required for fully efficient folding. Also involved, together with DnaK and GrpE, in the DNA replication of plasmids through activation of initiation proteins. This is Chaperone protein DnaJ from Chelativorans sp. (strain BNC1).